Reading from the N-terminus, the 515-residue chain is Protein pid-4 (515 aa).

Positions 496-515 (DRSPQKFKFPASGSYMKPAN) are disordered.

As to quaternary structure, may interact with pid-2, app-1 and prmt-5.

It localises to the cytoplasm. It is found in the perinuclear region. The protein resides in the P-body. Its function is as follows. Together with pid-5, it is involved in gene silencing mediated by a class of 21 nucleotide PIWI-interacting RNAs (piRNAs) that possess a uracil residue at the 5'-end (also called 21U-RNAs) and guide the Piwi protein prg-1 to its DNA targets for silencing. Together with pid-5, it is required for the biogenesis of secondary and tertiary 22G-siRNAs. Specifically, promotes the production of 22G-siRNAs from the 5' end of target mRNAs. Together with pid-5, plays a role in small RNA-directed transgenerational epigenetic inheritance (also called RNAe) over several generations and germline immortality. Together with pid-5, plays a role in the formation of liquid-like condensates in the cytoplasm called Z granules. The protein is Protein pid-4 of Caenorhabditis elegans.